We begin with the raw amino-acid sequence, 142 residues long: Large ribosomal subunit protein uL11 (142 aa).

Belongs to the universal ribosomal protein uL11 family. Part of the ribosomal stalk of the 50S ribosomal subunit. Interacts with L10 and the large rRNA to form the base of the stalk. L10 forms an elongated spine to which L12 dimers bind in a sequential fashion forming a multimeric L10(L12)X complex. In terms of processing, one or more lysine residues are methylated.

Functionally, forms part of the ribosomal stalk which helps the ribosome interact with GTP-bound translation factors. In Bartonella bacilliformis (strain ATCC 35685 / KC583 / Herrer 020/F12,63), this protein is Large ribosomal subunit protein uL11.